The primary structure comprises 260 residues: Dolichol-phosphate mannosyltransferase subunit 1 (260 aa).

The tract at residues 1–20 (MAAEEASRSSPRFRREPKGR) is disordered. An N-acetylalanine modification is found at alanine 2. Serine 9 carries the phosphoserine modification. Residues proline 32, tyrosine 34, glutamate 36, isoleucine 63, aspartate 65, aspartate 118, alanine 119, aspartate 120, arginine 147, arginine 234, and lysine 240 each coordinate GDP-alpha-D-mannose. Residue aspartate 120 coordinates Mg(2+). Aspartate 120 contributes to the Mn(2+) binding site.

Belongs to the glycosyltransferase 2 family. Component of the dolichol-phosphate mannose (DPM) synthase complex composed of DPM1, DPM2 and DPM3; within the complex, directly interacts with DPM3. This interaction may stabilize DPM1. Mg(2+) serves as cofactor. The cofactor is Mn(2+). Requires Ca(2+) as cofactor.

Its subcellular location is the endoplasmic reticulum. It carries out the reaction a di-trans,poly-cis-dolichyl phosphate + GDP-alpha-D-mannose = a di-trans,poly-cis-dolichyl beta-D-mannosyl phosphate + GDP. The protein operates within protein modification; protein glycosylation. Functionally, transfers mannose from GDP-mannose to dolichol monophosphate to form dolichol phosphate mannose (Dol-P-Man) which is the mannosyl donor in pathways leading to N-glycosylation, glycosyl phosphatidylinositol membrane anchoring, and O-mannosylation of proteins; catalytic subunit of the dolichol-phosphate mannose (DPM) synthase complex. This Bos taurus (Bovine) protein is Dolichol-phosphate mannosyltransferase subunit 1 (DPM1).